The sequence spans 969 residues: Rab3 GTPase-activating protein catalytic subunit (969 aa).

Basic and acidic residues predominate over residues 532–549 (DDGKKSSSSDGARDRSRG). Positions 532-613 (DDGKKSSSSD…PEGRLQPHGT (82 aa)) are disordered. A compositionally biased stretch (low complexity) spans 550-572 (APEGAGPEGAGPAEAAGKSWDSW). Residues 573–589 (SDSEDEFFECVSDTEEM) show a composition bias toward acidic residues. Basic and acidic residues predominate over residues 590-608 (KEDKEEAENRSRSKPEGRL).

Belongs to the Rab3-GAP catalytic subunit family. The Rab3 GTPase-activating complex is a heterodimer composed of rab3gap1 and rab3gap2. The Rab3 GTPase-activating complex interacts with DMXL2. Interacts with LMAN1.

It localises to the cytoplasm. The protein localises to the endoplasmic reticulum. It is found in the golgi apparatus. The protein resides in the cis-Golgi network. Its function is as follows. Catalytic subunit of the Rab3 GTPase-activating (Rab3GAP) complex composed of rab3gap1 and rab3gap2, which has GTPase-activating protein (GAP) activity towards various Rab3 subfamily members (RAB3A, RAB3B, RAB3C and RAB3D), RAB5A and RAB43, and guanine nucleotide exchange factor (GEF) activity towards RAB18. As part of the Rab3GAP complex, acts as a GAP for Rab3 proteins by converting active RAB3-GTP to the inactive form RAB3-GDP. Rab3 proteins are involved in regulated exocytosis of neurotransmitters and hormones. The Rab3GAP complex, acts as a GEF for RAB18 by promoting the conversion of inactive RAB18-GDP to the active form RAB18-GTP. Recruits and stabilizes RAB18 at the cis-Golgi membrane where RAB18 is most likely activated. Also involved in RAB18 recruitment at the endoplasmic reticulum (ER) membrane where it maintains proper ER structure. Required for normal eye and brain development. May participate in neurodevelopmental processes such as proliferation, migration and differentiation before synapse formation, and non-synaptic vesicular release of neurotransmitters. In Danio rerio (Zebrafish), this protein is Rab3 GTPase-activating protein catalytic subunit (rab3gap1).